The following is a 204-amino-acid chain: Large ribosomal subunit protein eL15 (204 aa).

Belongs to the eukaryotic ribosomal protein eL15 family. In terms of assembly, component of the large ribosomal subunit.

The protein localises to the cytoplasm. Functionally, component of the large ribosomal subunit. The ribosome is a large ribonucleoprotein complex responsible for the synthesis of proteins in the cell. This Hypophthalmichthys molitrix (Silver carp) protein is Large ribosomal subunit protein eL15 (rpl15).